The following is a 271-amino-acid chain: Formamidopyrimidine-DNA glycosylase (271 aa).

Pro2 acts as the Schiff-base intermediate with DNA in catalysis. Glu3 serves as the catalytic Proton donor. Lys58 (proton donor; for beta-elimination activity) is an active-site residue. Residues His92, Arg111, and Arg152 each contribute to the DNA site. The segment at 237–271 (TVYGREGEPCKQCGRVLKHAMIGQRATVWCGSCQR) adopts an FPG-type zinc-finger fold. Arg261 serves as the catalytic Proton donor; for delta-elimination activity.

This sequence belongs to the FPG family. As to quaternary structure, monomer. It depends on Zn(2+) as a cofactor.

The enzyme catalyses Hydrolysis of DNA containing ring-opened 7-methylguanine residues, releasing 2,6-diamino-4-hydroxy-5-(N-methyl)formamidopyrimidine.. It catalyses the reaction 2'-deoxyribonucleotide-(2'-deoxyribose 5'-phosphate)-2'-deoxyribonucleotide-DNA = a 3'-end 2'-deoxyribonucleotide-(2,3-dehydro-2,3-deoxyribose 5'-phosphate)-DNA + a 5'-end 5'-phospho-2'-deoxyribonucleoside-DNA + H(+). Involved in base excision repair of DNA damaged by oxidation or by mutagenic agents. Acts as a DNA glycosylase that recognizes and removes damaged bases. Has a preference for oxidized purines, such as 7,8-dihydro-8-oxoguanine (8-oxoG). Has AP (apurinic/apyrimidinic) lyase activity and introduces nicks in the DNA strand. Cleaves the DNA backbone by beta-delta elimination to generate a single-strand break at the site of the removed base with both 3'- and 5'-phosphates. In Xanthomonas oryzae pv. oryzae (strain MAFF 311018), this protein is Formamidopyrimidine-DNA glycosylase.